The primary structure comprises 417 residues: Serine hydroxymethyltransferase (417 aa).

Residues leucine 117 and 121–123 contribute to the (6S)-5,6,7,8-tetrahydrofolate site; that span reads GHL. Residue lysine 226 is modified to N6-(pyridoxal phosphate)lysine.

Belongs to the SHMT family. In terms of assembly, homodimer. Requires pyridoxal 5'-phosphate as cofactor.

It localises to the cytoplasm. The catalysed reaction is (6R)-5,10-methylene-5,6,7,8-tetrahydrofolate + glycine + H2O = (6S)-5,6,7,8-tetrahydrofolate + L-serine. The protein operates within one-carbon metabolism; tetrahydrofolate interconversion. It functions in the pathway amino-acid biosynthesis; glycine biosynthesis; glycine from L-serine: step 1/1. Its function is as follows. Catalyzes the reversible interconversion of serine and glycine with tetrahydrofolate (THF) serving as the one-carbon carrier. This reaction serves as the major source of one-carbon groups required for the biosynthesis of purines, thymidylate, methionine, and other important biomolecules. Also exhibits THF-independent aldolase activity toward beta-hydroxyamino acids, producing glycine and aldehydes, via a retro-aldol mechanism. In Syntrophus aciditrophicus (strain SB), this protein is Serine hydroxymethyltransferase.